The primary structure comprises 485 residues: Katanin p60 ATPase-containing subunit A1 (485 aa).

Positions 101-173 (HRSSPCVVRK…KNKAEAVETE (73 aa)) are disordered. The segment covering 141-173 (NGDKGKPQKSKEKKENPSKPKEDKNKAEAVETE) has biased composition (basic and acidic residues). Residue 244–251 (GPPGTGKT) coordinates ATP.

This sequence belongs to the AAA ATPase family. Katanin p60 subunit A1 subfamily. In terms of assembly, can homooligomerize into hexameric rings, which may be promoted by interaction with microtubules. Interacts with katnb1, which may serve as a targeting subunit.

It localises to the cytoplasm. The protein localises to the cytoskeleton. The protein resides in the microtubule organizing center. Its subcellular location is the centrosome. It is found in the spindle pole. It localises to the spindle. The catalysed reaction is n ATP + n H2O + a microtubule = n ADP + n phosphate + (n+1) alpha/beta tubulin heterodimers.. With respect to regulation, ATPase activity is stimulated by microtubules, which promote homooligomerization. ATP-dependent microtubule severing is stimulated by interaction with katnb1. In terms of biological role, catalytic subunit of a complex which severs microtubules in an ATP-dependent manner. Microtubule severing may promote rapid reorganization of cellular microtubule arrays and the release of microtubules from the centrosome following nucleation. The protein is Katanin p60 ATPase-containing subunit A1 (katna1) of Danio rerio (Zebrafish).